Consider the following 166-residue polypeptide: MDSLENLILVGVIKSCHGIKGHIILRSFTDPTVKITERELVNESGEKVNINLIKQNSKGELICQFNDISTRNEAANLKGYKLFCLRSSLPKLEEDEFYITDLNNLPILDNNHTEIGKIKNILNFGAGDIIEVEFLDKTTELLPFNKDFFPIITKDYAILNYKRDEL.

The 73-residue stretch at Glu94–Leu166 folds into the PRC barrel domain.

Belongs to the RimM family. Binds ribosomal protein uS19.

It localises to the cytoplasm. In terms of biological role, an accessory protein needed during the final step in the assembly of 30S ribosomal subunit, possibly for assembly of the head region. Essential for efficient processing of 16S rRNA. May be needed both before and after RbfA during the maturation of 16S rRNA. It has affinity for free ribosomal 30S subunits but not for 70S ribosomes. This Rickettsia bellii (strain RML369-C) protein is Ribosome maturation factor RimM.